Here is a 285-residue protein sequence, read N- to C-terminus: MEDYILKVEELNYNYSDGTHALKGINMNIKRGEVTAILGGNGVGKSTLFQNFNGILKPSSGRILFDNKPIDYSRKGIMKLRESIGIVFQDPDNQLFSASVYQDVSFGAVNMKLPEDEIRKRVDNALKRTGIEHLKDKPTHCLSFGQKKRVAIAGVLVMEPKVLILDEPTAGLDPMGVSEIMKLLVEMQKELGITIIIATHDIDIVPLYCDNVFVMKEGRVILQGNPKEVFAEKEVIRKVNLRLPRIGHLMEILKEKDGFVFDELDLTIGQARKTINSWKNKIFND.

The region spanning 6–242 (LKVEELNYNY…KEVIRKVNLR (237 aa)) is the ABC transporter domain. Residue 39 to 46 (GGNGVGKS) participates in ATP binding.

The protein belongs to the ABC transporter superfamily. Energy-coupling factor EcfA family. In terms of assembly, forms a stable energy-coupling factor (ECF) transporter complex composed of 2 membrane-embedded substrate-binding proteins (S component), 2 ATP-binding proteins (A component) and 2 transmembrane proteins (T component).

It is found in the cell membrane. In terms of biological role, ATP-binding (A) component of a common energy-coupling factor (ECF) ABC-transporter complex. Unlike classic ABC transporters this ECF transporter provides the energy necessary to transport a number of different substrates. The chain is Energy-coupling factor transporter ATP-binding protein EcfA3 from Clostridium perfringens (strain ATCC 13124 / DSM 756 / JCM 1290 / NCIMB 6125 / NCTC 8237 / Type A).